Reading from the N-terminus, the 341-residue chain is Tetraacyldisaccharide 4'-kinase (341 aa).

Residue 54-61 (TVGGAGKT) participates in ATP binding.

This sequence belongs to the LpxK family.

The catalysed reaction is a lipid A disaccharide + ATP = a lipid IVA + ADP + H(+). It functions in the pathway glycolipid biosynthesis; lipid IV(A) biosynthesis; lipid IV(A) from (3R)-3-hydroxytetradecanoyl-[acyl-carrier-protein] and UDP-N-acetyl-alpha-D-glucosamine: step 6/6. Its function is as follows. Transfers the gamma-phosphate of ATP to the 4'-position of a tetraacyldisaccharide 1-phosphate intermediate (termed DS-1-P) to form tetraacyldisaccharide 1,4'-bis-phosphate (lipid IVA). The sequence is that of Tetraacyldisaccharide 4'-kinase from Brucella melitensis biotype 1 (strain ATCC 23456 / CCUG 17765 / NCTC 10094 / 16M).